The primary structure comprises 78 residues: U-scoloptoxin(04)-Er1b (78 aa).

An N-terminal signal peptide occupies residues 1–24 (MTRHLIFAAVLLVCLFVCWNAVGA). A propeptide spanning residues 25-28 (QDAR) is cleaved from the precursor.

This sequence belongs to the scoloptoxin-04 family. In terms of processing, contains 2 disulfide bonds. As to expression, expressed by the venom gland.

It localises to the secreted. The sequence is that of U-scoloptoxin(04)-Er1b from Ethmostigmus rubripes (Giant centipede).